Reading from the N-terminus, the 185-residue chain is uncharacterized protein (185 aa).

The N-terminal stretch at 1–29 (MKLFSRTSLVALGTAAAITLSGVTAPAFA) is a signal peptide. The tract at residues 41–66 (KTAEDNTPEAPGASTPLKLEQPGTIT) is disordered.

In terms of processing, glycosylated; by Pmt.

The protein localises to the secreted. This is an uncharacterized protein from Corynebacterium glutamicum (strain ATCC 13032 / DSM 20300 / JCM 1318 / BCRC 11384 / CCUG 27702 / LMG 3730 / NBRC 12168 / NCIMB 10025 / NRRL B-2784 / 534).